The chain runs to 467 residues: Dihydroorotase (467 aa).

Zn(2+) is bound by residues His60 and His62. Residues 62–64 and Asn94 contribute to the substrate site; that span reads HFR. Zn(2+)-binding residues include Glu146, His180, His234, and Asp313. Asp313 is an active-site residue. His317 contacts substrate. The segment at 439–467 is disordered; it reads KPGRGEFLEGSGKRSEEDEEENSEETGSD. A compositionally biased stretch (basic and acidic residues) spans 441 to 454; the sequence is GRGEFLEGSGKRSE. The segment covering 455–467 has biased composition (acidic residues); the sequence is EDEEENSEETGSD.

Belongs to the metallo-dependent hydrolases superfamily. DHOase family. Class I DHOase subfamily. Zn(2+) is required as a cofactor.

It catalyses the reaction (S)-dihydroorotate + H2O = N-carbamoyl-L-aspartate + H(+). Its pathway is pyrimidine metabolism; UMP biosynthesis via de novo pathway; (S)-dihydroorotate from bicarbonate: step 3/3. In terms of biological role, catalyzes the reversible cyclization of carbamoyl aspartate to dihydroorotate. This Methanosarcina acetivorans (strain ATCC 35395 / DSM 2834 / JCM 12185 / C2A) protein is Dihydroorotase.